Reading from the N-terminus, the 241-residue chain is UDP-2,3-diacylglucosamine hydrolase (241 aa).

Mn(2+) contacts are provided by Asp8, His10, Asp41, Asn79, and His114. 79 to 80 (NR) contacts substrate. Substrate contacts are provided by Asp122, Ser160, Lys167, and His195. Residues His195 and His197 each coordinate Mn(2+).

Belongs to the LpxH family. Mn(2+) serves as cofactor.

It localises to the cell inner membrane. The catalysed reaction is UDP-2-N,3-O-bis[(3R)-3-hydroxytetradecanoyl]-alpha-D-glucosamine + H2O = 2-N,3-O-bis[(3R)-3-hydroxytetradecanoyl]-alpha-D-glucosaminyl 1-phosphate + UMP + 2 H(+). The protein operates within glycolipid biosynthesis; lipid IV(A) biosynthesis; lipid IV(A) from (3R)-3-hydroxytetradecanoyl-[acyl-carrier-protein] and UDP-N-acetyl-alpha-D-glucosamine: step 4/6. Hydrolyzes the pyrophosphate bond of UDP-2,3-diacylglucosamine to yield 2,3-diacylglucosamine 1-phosphate (lipid X) and UMP by catalyzing the attack of water at the alpha-P atom. Involved in the biosynthesis of lipid A, a phosphorylated glycolipid that anchors the lipopolysaccharide to the outer membrane of the cell. The sequence is that of UDP-2,3-diacylglucosamine hydrolase from Azotobacter vinelandii (strain DJ / ATCC BAA-1303).